A 296-amino-acid polypeptide reads, in one-letter code: Cleavage and polyadenylation specificity factor subunit 4 (296 aa).

5 C3H1-type zinc fingers span residues 35–63 (KSIAAVCNFITRNGQECDKGSACPFRHIR), 64–91 (GDRTIVCKHWLRGLCKKGDQCEFLHEYD), 92–119 (MTKMPECYFYSRFNACHNKECPFLHIDP), 120–147 (QSKVKDCPWYKRGFCRHGPHCRHQHLRR), and 149–171 (LCMDYLAGFCPEGPSCKHMHPHF). The CCHC-type 1 zinc finger occupies 189 to 206 (PTCHYCGELGHKANSCKQ). Residues 222–254 (HSGGHSGGYSGHSGHIEGADDMQSNHHSQPHGP) are disordered. Residues 266 to 283 (ITCYKCGNKGHYANKCPK) form a CCHC-type 2 zinc finger.

In terms of assembly, component of the cleavage and polyadenylation specificity factor (CPSF) complex, composed of at least Clp, Cpsf73, Cpsf100 and Cpsf160. In terms of tissue distribution, during oogenesis, expression is detected in the germarium, in nurse cells, in the oocyte, and in the somatically derived follicular epithelial cells (at protein level). At oogenesis stage 12, nurse cells degenerate and their content is transferred into the oocyte. In larvae, expressed in all organs and disks (at protein level). In the larval salivary gland, expression is initially confined to cells at the anterior end but later expands throughout the entire gland (at protein level).

Its subcellular location is the nucleus. Component of the cleavage and polyadenylation specificity factor (CPSF) complex that plays a key role in pre-mRNA 3'-end formation, recognizing the AAUAAA signal sequence and interacting with poly(A) polymerase and other factors to bring about cleavage and poly(A) addition. Has endonuclease activity. Binds RNA polymers with a preference for G- and/or C-rich clusters. Binds single-stranded DNA non-specifically. The chain is Cleavage and polyadenylation specificity factor subunit 4 (Clp) from Drosophila melanogaster (Fruit fly).